The chain runs to 219 residues: Ribose-5-phosphate isomerase A (219 aa).

Residues 28-31 (TGST), 81-84 (DGAD), and 94-97 (KGGG) each bind substrate. Glutamate 103 functions as the Proton acceptor in the catalytic mechanism. Residue lysine 121 participates in substrate binding.

Belongs to the ribose 5-phosphate isomerase family. In terms of assembly, homodimer.

The enzyme catalyses aldehydo-D-ribose 5-phosphate = D-ribulose 5-phosphate. It functions in the pathway carbohydrate degradation; pentose phosphate pathway; D-ribose 5-phosphate from D-ribulose 5-phosphate (non-oxidative stage): step 1/1. In terms of biological role, catalyzes the reversible conversion of ribose-5-phosphate to ribulose 5-phosphate. This Methylibium petroleiphilum (strain ATCC BAA-1232 / LMG 22953 / PM1) protein is Ribose-5-phosphate isomerase A.